The following is a 220-amino-acid chain: Deoxyribose-phosphate aldolase (220 aa).

Asp89 serves as the catalytic Proton donor/acceptor. Lys151 serves as the catalytic Schiff-base intermediate with acetaldehyde. The active-site Proton donor/acceptor is Lys180.

The protein belongs to the DeoC/FbaB aldolase family. DeoC type 1 subfamily.

It is found in the cytoplasm. It carries out the reaction 2-deoxy-D-ribose 5-phosphate = D-glyceraldehyde 3-phosphate + acetaldehyde. It participates in carbohydrate degradation; 2-deoxy-D-ribose 1-phosphate degradation; D-glyceraldehyde 3-phosphate and acetaldehyde from 2-deoxy-alpha-D-ribose 1-phosphate: step 2/2. In terms of biological role, catalyzes a reversible aldol reaction between acetaldehyde and D-glyceraldehyde 3-phosphate to generate 2-deoxy-D-ribose 5-phosphate. This Streptococcus pneumoniae serotype 4 (strain ATCC BAA-334 / TIGR4) protein is Deoxyribose-phosphate aldolase.